The following is a 270-amino-acid chain: Sulfur carrier protein FdhD (270 aa).

The active-site Cysteine persulfide intermediate is the cysteine 108. 247 to 252 provides a ligand contact to Mo-bis(molybdopterin guanine dinucleotide); the sequence is FIRDGR.

The protein belongs to the FdhD family.

It is found in the cytoplasm. Its function is as follows. Required for formate dehydrogenase (FDH) activity. Acts as a sulfur carrier protein that transfers sulfur from IscS to the molybdenum cofactor prior to its insertion into FDH. This is Sulfur carrier protein FdhD from Halalkalibacterium halodurans (strain ATCC BAA-125 / DSM 18197 / FERM 7344 / JCM 9153 / C-125) (Bacillus halodurans).